A 99-amino-acid polypeptide reads, in one-letter code: Integration host factor subunit alpha (99 aa).

The tract at residues 49–71 (FGNFDLRDKNQRPGRNPKTGEDI) is disordered.

This sequence belongs to the bacterial histone-like protein family. In terms of assembly, heterodimer of an alpha and a beta chain.

Its function is as follows. This protein is one of the two subunits of integration host factor, a specific DNA-binding protein that functions in genetic recombination as well as in transcriptional and translational control. The protein is Integration host factor subunit alpha of Shewanella denitrificans (strain OS217 / ATCC BAA-1090 / DSM 15013).